Consider the following 489-residue polypeptide: Netrin-5 (489 aa).

Residues 1 to 16 (MPVTFALLLLLGQATA) form the signal peptide. A glycan (N-linked (GlcNAc...) asparagine) is linked at Asn-62. 15 cysteine pairs are disulfide-bonded: Cys-157/Cys-166, Cys-159/Cys-175, Cys-177/Cys-186, Cys-189/Cys-209, Cys-212/Cys-221, Cys-214/Cys-239, Cys-242/Cys-251, Cys-254/Cys-272, Cys-275/Cys-287, Cys-277/Cys-294, Cys-296/Cys-305, Cys-308/Cys-322, Cys-345/Cys-418, Cys-349/Cys-420, and Cys-364/Cys-475. 3 consecutive Laminin EGF-like domains span residues 157-211 (CQCH…PCLP), 212-274 (CSCN…ACRA), and 275-324 (CQCH…PCQR). In terms of domain architecture, NTR spans 345 to 475 (CQNYCNMSDT…LQQEERAGGC (131 aa)). Positions 470-489 (ERAGGCRGVRAPTPSPRPEH) are disordered.

It localises to the secreted. Plays a role in neurogenesis. Prevents motor neuron cell body migration out of the neural tube. This chain is Netrin-5 (NTN5), found in Homo sapiens (Human).